A 200-amino-acid polypeptide reads, in one-letter code: Small ribosomal subunit protein uS4 (200 aa).

Positions 92 to 155 (SRLDAVVYSL…QKLNIIVESV (64 aa)) constitute an S4 RNA-binding domain.

The protein belongs to the universal ribosomal protein uS4 family. Part of the 30S ribosomal subunit. Contacts protein S5. The interaction surface between S4 and S5 is involved in control of translational fidelity.

Functionally, one of the primary rRNA binding proteins, it binds directly to 16S rRNA where it nucleates assembly of the body of the 30S subunit. Its function is as follows. With S5 and S12 plays an important role in translational accuracy. This is Small ribosomal subunit protein uS4 from Staphylococcus aureus (strain JH9).